We begin with the raw amino-acid sequence, 185 residues long: Large ribosomal subunit protein uL5 (185 aa).

The protein belongs to the universal ribosomal protein uL5 family. As to quaternary structure, part of the 50S ribosomal subunit; contacts the 5S rRNA and probably tRNA. Forms a bridge to the 30S subunit in the 70S ribosome.

Functionally, this is one of the proteins that bind and probably mediate the attachment of the 5S RNA into the large ribosomal subunit, where it forms part of the central protuberance. In the 70S ribosome it contacts protein S13 of the 30S subunit (bridge B1b), connecting the 2 subunits; this bridge is implicated in subunit movement. May contact the P site tRNA; the 5S rRNA and some of its associated proteins might help stabilize positioning of ribosome-bound tRNAs. In Haloquadratum walsbyi (strain DSM 16790 / HBSQ001), this protein is Large ribosomal subunit protein uL5.